The chain runs to 119 residues: uncharacterized protein (119 aa).

This is an uncharacterized protein from Saccharomyces cerevisiae (strain ATCC 204508 / S288c) (Baker's yeast).